The chain runs to 595 residues: Aspartate--tRNA(Asp/Asn) ligase (595 aa).

An L-aspartate-binding site is contributed by Glu175. The aspartate stretch occupies residues 199–202 (QQYK). L-aspartate-binding residues include Arg221 and His454. 221–223 (RDE) provides a ligand contact to ATP. Glu488 provides a ligand contact to ATP. Position 495 (Arg495) interacts with L-aspartate. 540 to 543 (GIDR) lines the ATP pocket.

It belongs to the class-II aminoacyl-tRNA synthetase family. Type 1 subfamily. Homodimer.

It localises to the cytoplasm. The enzyme catalyses tRNA(Asx) + L-aspartate + ATP = L-aspartyl-tRNA(Asx) + AMP + diphosphate. Aspartyl-tRNA synthetase with relaxed tRNA specificity since it is able to aspartylate not only its cognate tRNA(Asp) but also tRNA(Asn). Reaction proceeds in two steps: L-aspartate is first activated by ATP to form Asp-AMP and then transferred to the acceptor end of tRNA(Asp/Asn). This chain is Aspartate--tRNA(Asp/Asn) ligase, found in Agrobacterium fabrum (strain C58 / ATCC 33970) (Agrobacterium tumefaciens (strain C58)).